A 1107-amino-acid chain; its full sequence is Miniconductance mechanosensitive channel MscM (1107 aa).

Positions 1–19 (MRLIITFLMAWCLSWGAYA) are cleaved as a signal peptide. Helical transmembrane passes span 467–487 (VMML…ILVG), 522–542 (LFWS…LGYG), 551–571 (LAVA…VVMI), 600–620 (YLMS…FDNL), 628–648 (SLGR…TLSL), 674–694 (MMIG…LATA), 698–718 (LARL…YHVI), 785–805 (ILML…HSAF), 828–848 (PITL…TQLV), 875–895 (TITK…MIGI), and 910–930 (GLGF…IILF).

This sequence belongs to the MscS (TC 1.A.23) family. As to quaternary structure, homoheptamer.

The protein localises to the cell inner membrane. Mechanosensitive channel that protects cells against hypoosmotic stress when highly overexpressed. Gates spontaneously in response to increased membrane tension. The sequence is that of Miniconductance mechanosensitive channel MscM (mscM) from Escherichia coli (strain K12).